Consider the following 464-residue polypeptide: UDP-N-acetylmuramate--L-alanine ligase (464 aa).

115–121 contributes to the ATP binding site; it reads GSHGKTT.

The protein belongs to the MurCDEF family.

It is found in the cytoplasm. The enzyme catalyses UDP-N-acetyl-alpha-D-muramate + L-alanine + ATP = UDP-N-acetyl-alpha-D-muramoyl-L-alanine + ADP + phosphate + H(+). The protein operates within cell wall biogenesis; peptidoglycan biosynthesis. Its function is as follows. Cell wall formation. This Pelagibacter ubique (strain HTCC1062) protein is UDP-N-acetylmuramate--L-alanine ligase.